A 681-amino-acid chain; its full sequence is PWWP domain-containing DNA repair factor 3B (681 aa).

The span at 102 to 121 (NLSQESMSEEQPTATASENV) shows a compositional bias: polar residues. Disordered stretches follow at residues 102–144 (NLSQ…TQED), 166–200 (HTTG…DDKK), and 285–304 (QNQS…AGCS). Residue Ser-128 is modified to Phosphoserine. Polar residues predominate over residues 285-302 (QNQSSVESDVGAETSTAG). Positions 377–438 (TGMIVWFKYQ…KKYDCKEKQA (62 aa)) constitute a PWWP domain.

This sequence belongs to the PWWP3A family.

In Mus musculus (Mouse), this protein is PWWP domain-containing DNA repair factor 3B (Pwwp3b).